The sequence spans 147 residues: MPKANIYYFVEDIQFKLPNPKIITDWIHNVIQQENCQLVNLNFIFCSDNFLHKKNLKYLQHDTLTDVITFSYAEDQKNIEGEIYISIERVSDNATTYQIDFWQELYTVMIHGVLHLLGYNDETLLEQEEMRKKESIYMLANRIVNLH.

Zn(2+)-binding residues include H111, H115, and D121.

The protein belongs to the endoribonuclease YbeY family. Zn(2+) is required as a cofactor.

The protein localises to the cytoplasm. Single strand-specific metallo-endoribonuclease involved in late-stage 70S ribosome quality control and in maturation of the 3' terminus of the 16S rRNA. This Amoebophilus asiaticus (strain 5a2) protein is Endoribonuclease YbeY.